The sequence spans 341 residues: Ribosomal RNA small subunit methyltransferase C (341 aa).

Belongs to the methyltransferase superfamily. RsmC family. In terms of assembly, monomer.

The protein resides in the cytoplasm. The enzyme catalyses guanosine(1207) in 16S rRNA + S-adenosyl-L-methionine = N(2)-methylguanosine(1207) in 16S rRNA + S-adenosyl-L-homocysteine + H(+). Specifically methylates the guanine in position 1207 of 16S rRNA in the 30S particle. This Vibrio parahaemolyticus serotype O3:K6 (strain RIMD 2210633) protein is Ribosomal RNA small subunit methyltransferase C.